The chain runs to 304 residues: MNQYMEFYKLLGEFYNEEDITVDSPMSEHIYFRVGGPADILVTPVNEEQVVNTLKLCREYNVPYFILGNGSNILVKDGGISGVVIKFNKLNKITTEGNCVTAQSGALLKDVSKAALENNLRGFEFACGIPGSIGGAVFMNAGAYDGEMAHVIKSARVIDENCNIKNLTKEELELGYRSSIVMKKGYVVIEATIELESGEYASIKDKIDDLTNRRESKQPLEYPSAGSTFKRPEGYFAGKLIQDSGLKGFSIGGAAVSEKHSGFVINKGGATAKDVLDVIAHVQKTVKENFDVELHTEVRIIGRD.

The 166-residue stretch at 33-198 (RVGGPADILV…IEATIELESG (166 aa)) folds into the FAD-binding PCMH-type domain. The active site involves arginine 177. Serine 227 acts as the Proton donor in catalysis. Glutamate 297 is an active-site residue.

The protein belongs to the MurB family. It depends on FAD as a cofactor.

It localises to the cytoplasm. It catalyses the reaction UDP-N-acetyl-alpha-D-muramate + NADP(+) = UDP-N-acetyl-3-O-(1-carboxyvinyl)-alpha-D-glucosamine + NADPH + H(+). It participates in cell wall biogenesis; peptidoglycan biosynthesis. Cell wall formation. The sequence is that of UDP-N-acetylenolpyruvoylglucosamine reductase from Clostridium perfringens (strain SM101 / Type A).